The following is a 133-amino-acid chain: Interleukin-4 (133 aa).

Positions 1 to 24 are cleaved as a signal peptide; that stretch reads MGLTYQLIPALVCLLAFTSTFVHG. 6 N-linked (GlcNAc...) asparagine glycosylation sites follow: Asn-28, Asn-45, Asn-62, Asn-84, Asn-96, and Asn-102. 2 disulfides stabilise this stretch: Cys-48/Cys-85 and Cys-70/Cys-113.

It belongs to the IL-4/IL-13 family.

It localises to the secreted. Functionally, participates in at least several B-cell activation processes as well as of other cell types. It is a costimulator of DNA-synthesis. It induces the expression of class II MHC molecules on resting B-cells. It enhances both secretion and cell surface expression of IgE and IgG1. It also regulates the expression of the low affinity Fc receptor for IgE (CD23) on both lymphocytes and monocytes. Positively regulates IL31RA expression in macrophages. Stimulates autophagy in dendritic cells by interfering with mTORC1 signaling and through the induction of RUFY4. This Felis catus (Cat) protein is Interleukin-4 (IL4).